Reading from the N-terminus, the 191-residue chain is Probable nicotinate-nucleotide adenylyltransferase (191 aa).

It belongs to the NadD family.

It catalyses the reaction nicotinate beta-D-ribonucleotide + ATP + H(+) = deamido-NAD(+) + diphosphate. Its pathway is cofactor biosynthesis; NAD(+) biosynthesis; deamido-NAD(+) from nicotinate D-ribonucleotide: step 1/1. Its function is as follows. Catalyzes the reversible adenylation of nicotinate mononucleotide (NaMN) to nicotinic acid adenine dinucleotide (NaAD). The protein is Probable nicotinate-nucleotide adenylyltransferase of Staphylococcus epidermidis (strain ATCC 12228 / FDA PCI 1200).